The chain runs to 254 residues: 5'-nucleotidase SurE (254 aa).

The a divalent metal cation site is built by Asp-8, Asp-9, Ser-39, and Asn-97.

The protein belongs to the SurE nucleotidase family. The cofactor is a divalent metal cation.

It is found in the cytoplasm. It catalyses the reaction a ribonucleoside 5'-phosphate + H2O = a ribonucleoside + phosphate. Its function is as follows. Nucleotidase that shows phosphatase activity on nucleoside 5'-monophosphates. The polypeptide is 5'-nucleotidase SurE (Alkaliphilus metalliredigens (strain QYMF)).